A 510-amino-acid polypeptide reads, in one-letter code: ATP-dependent zinc metalloprotease FtsH 2 (510 aa).

Residues 1–4 (MKKN) lie on the Cytoplasmic side of the membrane. Residues 5–25 (LHIIILALSIFINLLFIYIFI) traverse the membrane as a helical segment. Residues 26–31 (SEVKPN) lie on the Extracellular side of the membrane. Residues 32–52 (LNLNLSFILTAAVIVVTYLLF) form a helical membrane-spanning segment. The Cytoplasmic segment spans residues 53 to 510 (KNKFSELMPV…LWEEENTLCV (458 aa)). 124–131 (GPPGTGKT) provides a ligand contact to ATP. His-343 provides a ligand contact to Zn(2+). Residue Glu-344 is part of the active site. Residues His-347 and Asp-418 each coordinate Zn(2+).

This sequence in the central section; belongs to the AAA ATPase family. The protein in the C-terminal section; belongs to the peptidase M41 family. In terms of assembly, homohexamer. Requires Zn(2+) as cofactor.

It is found in the cell membrane. Functionally, acts as a processive, ATP-dependent zinc metallopeptidase for both cytoplasmic and membrane proteins. Plays a role in the quality control of integral membrane proteins. This Thermoanaerobacter sp. (strain X514) protein is ATP-dependent zinc metalloprotease FtsH 2.